Consider the following 266-residue polypeptide: Protein-ADP-ribose hydrolase (266 aa).

The Macro domain maps to 74-265 (TDLKDLKPIK…LYKEALNRDA (192 aa)). 3 residues coordinate ADP-D-ribose: Asp-93, Ile-94, and Asn-107. 3 residues coordinate Zn(2+): Cys-113, His-118, and Cys-120. The ADP-D-ribose site is built by Cys-120, Ile-121, Asp-122, Ser-212, Thr-213, Gly-214, and Phe-216.

It belongs to the MacroD-type family. Zn-Macro subfamily. In terms of assembly, monomer. Directly interacts with the lipoylated form of GcvH-L. Zn(2+) serves as cofactor.

It catalyses the reaction 4-O-(ADP-D-ribosyl)-L-aspartyl-[protein] + H2O = L-aspartyl-[protein] + ADP-D-ribose + H(+). Its function is as follows. ADP-ribosylhydrolase that specifically reverses the SirTM-mediated mono-ADP-ribosylation at an asparatate residue of GcvH-L (SAV0324), by releasing ADP-ribose from the target protein. May play a role in the regulation of the response to host-induced oxidative stress. In Staphylococcus aureus (strain Mu50 / ATCC 700699), this protein is Protein-ADP-ribose hydrolase.